Here is a 610-residue protein sequence, read N- to C-terminus: Terminase, large subunit (610 aa).

Residues 30 to 94 form a ssDNA-binding region; the sequence is RKDEDGIHWI…SRYMGLPNLK (65 aa). The segment at 131–301 is ATPase activity; sequence DYGVIKVQLR…NHFYDIWTAA (171 aa). Positions 138 and 143 each coordinate ATP. A Walker A motif motif is present at residues 161-167; sequence SRQLGKT. Arg-202 provides a ligand contact to ATP. The short motif at 251 to 256 is the Walker B motif element; the sequence is MIYIDE. The active-site For ATPase activity is the Glu-256. The short motif at 285-287 is the ATPase coupling element; the sequence is TTT. The binding to the portal protein stretch occupies residues 328 to 352; that stretch reads IFDDGWQWSIQTINGSSLAQFRQEH. Positions 360 to 559 are nuclease activity; it reads SGTLISGMKL…FGWLSTQSKF (200 aa). 3 residues coordinate Mg(2+): Asp-401, Glu-458, and Asp-542.

Belongs to the Tequatrovirus large terminase family. Interacts with the terminase small subunit; the active complex is composed of a pentamer of terminase large subunits and a dodecamer of terminase small subunits. Interacts with the portal protein. Interacts with the RNA polymerase sigma factor gp55. Mg(2+) is required as a cofactor. Phosphorylated.

With respect to regulation, stimulated up to 50 to 100-fold by the terminase small subunit. Modestly activated by portal protein and single-stranded binding protein gp32 multimers. In terms of biological role, the terminase large subunit acts as an ATP driven molecular motor necessary for viral DNA translocation into empty capsids and as an endonuclease that cuts the viral genome to initiate and to end a packaging reaction. The terminase lies at a unique vertex of the procapsid and is composed of two subunits, a small terminase subunit involved in viral DNA recognition (packaging sequence), and a large terminase subunit possessing endonucleolytic and ATPase activities. Both terminase subunits heterooligomerize and are docked on the portal protein to form the packaging machine. The terminase large subunit exhibits endonuclease activity and cleaves the viral genome concatemer once the capsid is full (headful packaging). Once the capsid is packaged with the DNA, the terminase complex is substituted by the tail. This is Terminase, large subunit (17) from Escherichia coli (Bacteriophage T4).